We begin with the raw amino-acid sequence, 1898 residues long: Receptor-type tyrosine-protein phosphatase F (1898 aa).

Positions Met1–Gly29 are cleaved as a signal peptide. At Asp30–Trp1254 the chain is on the extracellular side. 3 Ig-like C2-type domains span residues Pro33–Ser123, Pro135–Tyr224, and Pro232–Thr314. Cys54 and Cys107 are joined by a disulfide. Lys68–Arg77 is a heparin binding site. Residue Asn117 is glycosylated (N-linked (GlcNAc...) asparagine). A disulfide bridge connects residues Cys156 and Cys207. Residues Asn250 and Asn295 are each glycosylated (N-linked (GlcNAc...) asparagine). Cys253 and Cys298 are oxidised to a cystine. 8 Fibronectin type-III domains span residues Pro321–Gln411, Pro416–Gly510, Gln514–Ser604, Pro609–Asp706, Pro711–Ala810, Val811–Ala905, Phe909–Met1001, and Phe1005–Asp1089. A disordered region spans residues Gly693–Arg713. Asn721 carries N-linked (GlcNAc...) asparagine glycosylation. Asn941 and Asn957 each carry an N-linked (GlcNAc...) asparagine glycan. The helical transmembrane segment at Val1255–Phe1275 threads the bilayer. Over Lys1276–Thr1898 the chain is Cytoplasmic. Position 1296 is a phosphoserine (Ser1296). Tyrosine-protein phosphatase domains lie at Phe1343 to Ala1598 and Met1630 to Tyr1889. Residues Asp1507, Cys1539–Arg1545, and Gln1583 each bind substrate. Cys1539 serves as the catalytic Phosphocysteine intermediate. Cys1830 (phosphocysteine intermediate) is an active-site residue.

This sequence belongs to the protein-tyrosine phosphatase family. Receptor class 2A subfamily. In terms of assembly, interacts with GRIP1. Interacts with PPFIA1, PPFIA2 and PPFIA3. Interacts with PTPRF.

The protein resides in the membrane. It carries out the reaction O-phospho-L-tyrosyl-[protein] + H2O = L-tyrosyl-[protein] + phosphate. Possible cell adhesion receptor. It possesses an intrinsic protein tyrosine phosphatase activity (PTPase) and dephosphorylates EPHA2 regulating its activity. Its function is as follows. The first PTPase domain has enzymatic activity, while the second one seems to affect the substrate specificity of the first one. This Rattus norvegicus (Rat) protein is Receptor-type tyrosine-protein phosphatase F (Ptprf).